Here is a 506-residue protein sequence, read N- to C-terminus: Histidine--tRNA ligase, mitochondrial (506 aa).

The transit peptide at Met-1–Cys-33 directs the protein to the mitochondrion. Ser-67 is subject to Phosphoserine. L-histidine-binding positions include Asp-131–Thr-133, Arg-158, Gln-174, Asp-178, Arg-327, and Tyr-331–Tyr-332. An N6-acetyllysine modification is found at Lys-444.

Belongs to the class-II aminoacyl-tRNA synthetase family. In terms of assembly, homodimer.

Its subcellular location is the mitochondrion. It carries out the reaction tRNA(His) + L-histidine + ATP = L-histidyl-tRNA(His) + AMP + diphosphate + H(+). Its function is as follows. Mitochondrial aminoacyl-tRNA synthetase that catalyzes the ATP-dependent ligation of histidine to the 3'-end of its cognate tRNA, via the formation of an aminoacyl-adenylate intermediate (His-AMP). The protein is Histidine--tRNA ligase, mitochondrial (HARS2) of Pongo abelii (Sumatran orangutan).